The chain runs to 485 residues: Peroxisomal catalase (485 aa).

Active-site residues include histidine 53 and asparagine 126. Tyrosine 336 serves as a coordination point for heme.

It belongs to the catalase family. In terms of assembly, homotetramer. It depends on heme as a cofactor.

It localises to the peroxisome matrix. It carries out the reaction 2 H2O2 = O2 + 2 H2O. Its function is as follows. Catalyzes the degradation of hydrogen peroxide (H(2)O(2)) generated by peroxisomal oxidases to water and oxygen, thereby protecting cells from the toxic effects of hydrogen peroxide. The sequence is that of Peroxisomal catalase (POX9) from Candida tropicalis (Yeast).